The following is a 333-amino-acid chain: (2R)-3-sulfolactate dehydrogenase (NADP(+)) (333 aa).

This sequence belongs to the LDH2/MDH2 oxidoreductase family.

It carries out the reaction (2R)-3-sulfolactate + NADP(+) = 3-sulfopyruvate + NADPH + H(+). Catalyzes the reduction of sulfopyruvate to (R)-sulfolactate. Together with SlcC, provides a racemase system that converts (2S)-3-sulfolactate to (2R)-3-sulfolactate, which is degraded further by (2R)-sulfolactate sulfo-lyase. The sequence is that of (2R)-3-sulfolactate dehydrogenase (NADP(+)) (comC) from Chromohalobacter salexigens (strain ATCC BAA-138 / DSM 3043 / CIP 106854 / NCIMB 13768 / 1H11).